Consider the following 134-residue polypeptide: Large ribosomal subunit protein uL16c (134 aa).

It belongs to the universal ribosomal protein uL16 family. Part of the 50S ribosomal subunit.

Its subcellular location is the plastid. The protein localises to the chloroplast. The sequence is that of Large ribosomal subunit protein uL16c from Solanum lycopersicum (Tomato).